Reading from the N-terminus, the 159-residue chain is Mediator of RNA polymerase II transcription subunit 10 (159 aa).

The interval S54–L77 is disordered.

This sequence belongs to the Mediator complex subunit 10 family. In terms of assembly, component of the Mediator complex.

It is found in the nucleus. Functionally, component of the Mediator complex, a coactivator involved in the regulated transcription of nearly all RNA polymerase II-dependent genes. Mediator functions as a bridge to convey information from gene-specific regulatory proteins to the basal RNA polymerase II transcription machinery. Mediator is recruited to promoters by direct interactions with regulatory proteins and serves as a scaffold for the assembly of a functional preinitiation complex with RNA polymerase II and the general transcription factors. In Aspergillus fumigatus (strain ATCC MYA-4609 / CBS 101355 / FGSC A1100 / Af293) (Neosartorya fumigata), this protein is Mediator of RNA polymerase II transcription subunit 10 (nut2).